Consider the following 133-residue polypeptide: Ycf54-like protein (133 aa).

It belongs to the ycf54 family.

This is Ycf54-like protein from Synechocystis sp. (strain ATCC 27184 / PCC 6803 / Kazusa).